A 356-amino-acid polypeptide reads, in one-letter code: MSFKNFKVVEKMIFGRGSFVQLDDVLAAQRKADDDFVVFLVDDVHQGKPLEARIPVKAQDLLIWVNVDEEPSTIQIDALTEQVQAFNGKLPVSVVGLGGGSTMDVAKAVSLMLTNPGGSAMYQGWDLIKKPAVHHIGIPTISGTGAEASRTAVLCGPVRKLGLNSDYTVFDQIIMDSELIDGVETDQWFYTGMDCYIHCVESLEGTFLNEFSKAYAEKAMDLCRQVYLEDHPEKDDKLMMASFMGGMSIAYSQVGACHAVSYGLSYILGYHHGIGNCIAFDVLEEFYPEGVAEFRLMMKKHNITLPKNICKDLPDETIAKMVAVTKSMGPLWANVYGPTWEEKVTDEMLTALFRRI.

It belongs to the iron-containing alcohol dehydrogenase family. It depends on a divalent metal cation as a cofactor.

The catalysed reaction is 3-deoxy-alpha-D-manno-oct-2-ulosonate + O2 = 3,8-dideoxy-8-oxo-alpha-D-manno-octulosonate + H2O2. It functions in the pathway bacterial outer membrane biogenesis; lipopolysaccharide biosynthesis. Inhibited by EDTA. Catalyzes the first step of the biosynthesis of Kdo8N (8-amino-3,8-dideoxy-D-manno-octulosonate) from Kdo (3-deoxy-D-manno-octulosonate). The polypeptide is 3-deoxy-alpha-D-manno-octulosonate 8-oxidase (Shewanella oneidensis (strain ATCC 700550 / JCM 31522 / CIP 106686 / LMG 19005 / NCIMB 14063 / MR-1)).